The primary structure comprises 328 residues: tRNA uridine(34) hydroxylase (328 aa).

Residues 130 to 224 (LDEDTVVLDT…YGKDPEVQGE (95 aa)) enclose the Rhodanese domain. Cys-184 serves as the catalytic Cysteine persulfide intermediate.

The protein belongs to the TrhO family.

The catalysed reaction is uridine(34) in tRNA + AH2 + O2 = 5-hydroxyuridine(34) in tRNA + A + H2O. Catalyzes oxygen-dependent 5-hydroxyuridine (ho5U) modification at position 34 in tRNAs. The polypeptide is tRNA uridine(34) hydroxylase (Streptococcus pyogenes serotype M12 (strain MGAS2096)).